The sequence spans 641 residues: MTTSSIRRQMKNIVNNYSEAEIKVREATSNDPWGPSSSLMTEIADLTYNVVAFSEIMSMVWKRLNDHGKNWRHVYKALTLLDYLIKTGSERVAQQCRENIFAIQTLKDFQYIDRDGKDQGINVREKSKQLVALLKDEERLKAERAQALKTKERMAQVATGMGSNQITFGRGSSQPNLSTSHSEQEYGKAGGSPASYHGSPEASLCPQHRTGAPLGQSEELQPLSQRHPFLPHLGLASRPNGDWSQPCLTCDRAARATSPRVSSELEQARPQTSGEEELQLQLALAMSREVAEQEERLRRGDDLRLQMALEESRRDTVKIPKKKEHGSLPQQTTLLDLMDALPSSGPAAQKAEPWGPSASTNQTNPWGGPAAPASTSDPWPSFGTKPAASIDPWGVPTGATVQSVPKNSDPWAASQQPASSAGKRASDAWGAVSTTKPVSVSGSFELFSNLNGTIKDDFSEFDNLRTSKKTAESVTSLPSQNNGTTSPDPFESQPLTVASSKPSSARKTPESFLGPNAALVNLDSLVTRPAPPAQSLNPFLAPGAPATSAPVNPFQVNQPQPLTLNQLRGSPVLGTSTSFGPGPGVESMAVASMTSAAPQPALGATGSSLTPLGPAMMNMVGSVGIPPSAAQATGTTNPFLL.

A 1,2-diacyl-sn-glycero-3-phospho-(1D-myo-inositol-4,5-bisphosphate) is bound by residues Arg8, Lys11, Arg25, Asn30, Arg63, and His73. The 133-residue stretch at 12-144 (NIVNNYSEAE…KDEERLKAER (133 aa)) folds into the ENTH domain. A phosphoserine mark is found at Arg153 and Gln156. The span at 163 to 181 (SNQITFGRGSSQPNLSTSH) shows a compositional bias: polar residues. 2 disordered regions span residues 163-214 (SNQI…GAPL) and 255-275 (RATS…TSGE). The residue at position 170 (Arg170) is an Omega-N-methylarginine. A phosphoserine mark is found at Ser173, Ser192, and Ser195. Polar residues predominate over residues 259 to 273 (PRVSSELEQARPQTS). UIM domains follow at residues 275–294 (EEEL…AEQE) and 300–319 (GDDL…TVKI). Residues 340–425 (ALPSSGPAAQ…QPASSAGKRA (86 aa)) form a disordered region. 6 tandem repeats follow at residues 352–354 (EPW), 364–366 (NPW), 377–379 (DPW), 391–393 (DPW), 409–411 (DPW), and 427–429 (DAW). Positions 352-639 (EPWGPSASTN…AQATGTTNPF (288 aa)) are 6 X 3 AA repeats of [DE]-P-W. A compositionally biased stretch (low complexity) spans 408 to 421 (SDPWAASQQPASSA). The tract at residues 470-512 (TAESVTSLPSQNNGTTSPDPFESQPLTVASSKPSSARKTPESF) is disordered. Polar residues predominate over residues 472–506 (ESVTSLPSQNNGTTSPDPFESQPLTVASSKPSSAR). At Ser486 the chain carries Phosphoserine. Position 508 is a phosphothreonine (Thr508). Tandem repeats lie at residues 537–539 (NPF) and 552–554 (NPF). The segment at 537 to 639 (NPFLAPGAPA…AQATGTTNPF (103 aa)) is 3 X 3 AA repeats of N-P-F. A Phosphoserine modification is found at Ser570. Repeat unit 3 spans residues 637–639 (NPF).

Belongs to the epsin family. As to quaternary structure, binds EPS15. Interacts with ITSN1. Binds AP-2 and clathrin. Interacts with UBQLN2. Post-translationally, ubiquitinated. In terms of tissue distribution, highest expression is found in brain. Detected at lower levels in lung and liver.

It localises to the cytoplasm. The protein resides in the cytoplasmic vesicle. The protein localises to the clathrin-coated vesicle. Its function is as follows. Plays a role in the formation of clathrin-coated invaginations and endocytosis. The chain is Epsin-2 (EPN2) from Homo sapiens (Human).